Here is a 73-residue protein sequence, read N- to C-terminus: Small, acid-soluble spore protein C5 (73 aa).

It belongs to the alpha/beta-type SASP family.

Its function is as follows. SASP are bound to spore DNA. They are double-stranded DNA-binding proteins that cause DNA to change to an a-like conformation. They protect the DNA backbone from chemical and enzymatic cleavage and are thus involved in dormant spore's high resistance to UV light. This Priestia megaterium (Bacillus megaterium) protein is Small, acid-soluble spore protein C5 (SASP-C5).